The following is a 205-amino-acid chain: Large ribosomal subunit protein uL4 (205 aa).

Residues 43 to 60 show a composition bias toward polar residues; sequence ARSGNRAQQTRAEVSAST. Positions 43-96 are disordered; the sequence is ARSGNRAQQTRAEVSASTHKPWRQKGTGRARSGRASSPIWRGGGVTFPNKPNEN. Over residues 62–74 the composition is skewed to basic residues; sequence KPWRQKGTGRARS.

It belongs to the universal ribosomal protein uL4 family. Part of the 50S ribosomal subunit.

Its function is as follows. One of the primary rRNA binding proteins, this protein initially binds near the 5'-end of the 23S rRNA. It is important during the early stages of 50S assembly. It makes multiple contacts with different domains of the 23S rRNA in the assembled 50S subunit and ribosome. Functionally, forms part of the polypeptide exit tunnel. This chain is Large ribosomal subunit protein uL4, found in Thiobacillus denitrificans (strain ATCC 25259 / T1).